Reading from the N-terminus, the 204-residue chain is INSIG protein homolog (204 aa).

5 consecutive transmembrane segments (helical) span residues 5 to 27 (ISEA…HSHV), 47 to 64 (FWFP…AELR), 76 to 97 (ARQA…ALVH), 101 to 118 (VVPV…TWCV), and 124 to 145 (GAAC…LVQL). His26 contacts a 1,2-diacyl-sn-glycerol. Position 150 (Tyr150) interacts with a 1,2-diacyl-sn-glycerol. Residues 162-179 (PFLAPLYFAFGVVAALLG) traverse the membrane as a helical segment.

This sequence belongs to the INSIG family. In terms of assembly, homotrimer.

The protein resides in the membrane. Functionally, diacylglycerol-binding protein. This chain is INSIG protein homolog, found in Mycolicibacterium vanbaalenii (strain DSM 7251 / JCM 13017 / BCRC 16820 / KCTC 9966 / NRRL B-24157 / PYR-1) (Mycobacterium vanbaalenii).